A 223-amino-acid chain; its full sequence is Receptor-transporting protein 2 (223 aa).

The Cytoplasmic portion of the chain corresponds to 1–193; it reads MSTSLTTCEW…KKGQAGFISS (193 aa). The segment at 52 to 161 adopts a 3CxxC-type zinc-finger fold; that stretch reads ASGRFHCSWC…SEFCEACQEG (110 aa). Residues 194 to 216 form a helical membrane-spanning segment; sequence FFSFRWCLFWGTLCLVIVYLQFF. Topologically, residues 217-223 are extracellular; that stretch reads RGRSGFL.

This sequence belongs to the TMEM7 family. Interacts with olfactory receptors. As to expression, predominantly expressed in olfactory and vomeronasal organs, in mature olfactory sensory neurons.

The protein localises to the cell membrane. Specifically promotes functional cell surface expression of olfactory receptors, but not of other GPCRs. The polypeptide is Receptor-transporting protein 2 (Rtp2) (Mus musculus (Mouse)).